A 295-amino-acid chain; its full sequence is Nucleotide-binding protein BLi03725/BL03417 (295 aa).

Residue 16 to 23 (GMSGAGKT) participates in ATP binding. Residue 67–70 (DLRG) coordinates GTP.

The protein belongs to the RapZ-like family.

Functionally, displays ATPase and GTPase activities. This Bacillus licheniformis (strain ATCC 14580 / DSM 13 / JCM 2505 / CCUG 7422 / NBRC 12200 / NCIMB 9375 / NCTC 10341 / NRRL NRS-1264 / Gibson 46) protein is Nucleotide-binding protein BLi03725/BL03417.